A 720-amino-acid chain; its full sequence is Phosphoribosylformylglycinamidine synthase subunit PurL (720 aa).

His-34 is an active-site residue. Residue Tyr-37 participates in ATP binding. Glu-83 serves as a coordination point for Mg(2+). Substrate-binding positions include 84-87 and Arg-106; that span reads SHNH. His-85 acts as the Proton acceptor in catalysis. Mg(2+) is bound at residue Asp-107. Residue Gln-231 participates in substrate binding. Asp-259 contributes to the Mg(2+) binding site. 303–305 lines the substrate pocket; it reads ESQ. Residues Asp-480 and Gly-517 each contribute to the ATP site. Position 518 (Asn-518) interacts with Mg(2+). Ser-520 is a substrate binding site.

Belongs to the FGAMS family. As to quaternary structure, monomer. Part of the FGAM synthase complex composed of 1 PurL, 1 PurQ and 2 PurS subunits.

The protein localises to the cytoplasm. The catalysed reaction is N(2)-formyl-N(1)-(5-phospho-beta-D-ribosyl)glycinamide + L-glutamine + ATP + H2O = 2-formamido-N(1)-(5-O-phospho-beta-D-ribosyl)acetamidine + L-glutamate + ADP + phosphate + H(+). It participates in purine metabolism; IMP biosynthesis via de novo pathway; 5-amino-1-(5-phospho-D-ribosyl)imidazole from N(2)-formyl-N(1)-(5-phospho-D-ribosyl)glycinamide: step 1/2. Functionally, part of the phosphoribosylformylglycinamidine synthase complex involved in the purines biosynthetic pathway. Catalyzes the ATP-dependent conversion of formylglycinamide ribonucleotide (FGAR) and glutamine to yield formylglycinamidine ribonucleotide (FGAM) and glutamate. The FGAM synthase complex is composed of three subunits. PurQ produces an ammonia molecule by converting glutamine to glutamate. PurL transfers the ammonia molecule to FGAR to form FGAM in an ATP-dependent manner. PurS interacts with PurQ and PurL and is thought to assist in the transfer of the ammonia molecule from PurQ to PurL. The protein is Phosphoribosylformylglycinamidine synthase subunit PurL of Haloarcula marismortui (strain ATCC 43049 / DSM 3752 / JCM 8966 / VKM B-1809) (Halobacterium marismortui).